Here is a 715-residue protein sequence, read N- to C-terminus: ATP-dependent zinc metalloprotease YME1L1 (715 aa).

The interval 31–54 (VSVNTSASPKQHRDTVAEHEAPSS) is disordered. Basic and acidic residues predominate over residues 41-52 (QHRDTVAEHEAP). The chain crosses the membrane as a helical span at residues 238–258 (ILFVLLLFGIYGLLKNPFLSV). ATP contacts are provided by Val-283, Thr-325, Gly-326, Lys-327, Thr-328, and Leu-329. Residue His-541 participates in Zn(2+) binding. Residue Glu-542 is part of the active site. Zn(2+) is bound by residues His-545 and Asp-619.

The protein in the N-terminal section; belongs to the AAA ATPase family. This sequence in the C-terminal section; belongs to the peptidase M41 family. Homohexamer; may also form heterohexamers. Exists in several complexes of 600-1100 kDa. Interacts with AFG1L. Requires Zn(2+) as cofactor. Post-translationally, proteolytically processed by mitochondrial processing peptidase (MPP) to generate the mature form. Degraded in an OMA1-dependent manner in response to oxidative stress.

The protein localises to the mitochondrion inner membrane. Its subcellular location is the mitochondrion. It catalyses the reaction ATP + H2O = ADP + phosphate + H(+). Functionally, ATP-dependent metalloprotease that catalyzes the degradation of folded and unfolded proteins with a suitable degron sequence in the mitochondrial intermembrane region. Plays an important role in regulating mitochondrial morphology and function by cleaving OPA1 at position S2, giving rise to a form of OPA1 that promotes maintenance of normal mitochondrial structure and mitochondrial protein metabolism. Ensures cell proliferation, maintains normal cristae morphology and complex I respiration activity, promotes antiapoptotic activity and protects mitochondria from the accumulation of oxidatively damaged membrane proteins. Required to control the accumulation of nonassembled respiratory chain subunits (NDUFB6, OX4 and ND1). Involved in the mitochondrial adaptation in response to various signals, such as stress or developmental cues, by mediating degradation of mitochondrial proteins to rewire the mitochondrial proteome. Catalyzes degradation of mitochondrial proteins, such as translocases, lipid transfer proteins and metabolic enzymes in response to nutrient starvation in order to limit mitochondrial biogenesis: mechanistically, YME1L is activated by decreased phosphatidylethanolamine levels caused by LPIN1 activity in response to mTORC1 inhibition. Acts as a regulator of adult neural stem cell self-renewal by promoting mitochondrial proteome rewiring, preserving neural stem and progenitor cells self-renewal. Required for normal, constitutive degradation of PRELID1. Catalyzes the degradation of OMA1 in response to membrane depolarization. Mediates degradation of TIMM17A downstream of the integrated stress response (ISR). Catalyzes degradation of MICU1 when MICU1 is not assembled via an interchain disulfide. The polypeptide is ATP-dependent zinc metalloprotease YME1L1 (Yme1l1) (Rattus norvegicus (Rat)).